The chain runs to 900 residues: Polycomb protein Su(z)12 (900 aa).

The segment covering 1 to 12 (MAPAKKREKDSN) has biased composition (basic and acidic residues). Residues 1-44 (MAPAKKREKDSNPDGSAANGIIGLTHGAPDASNAGSTVPPTAEG) form a disordered region. A C2H2-type zinc finger spans residues 411 to 434 (LNCPWCGLDCLRLYALLKHLKLCH). The segment at 527–603 (RLYHHTETCL…CQLPIACEMF (77 aa)) is VEFS-box. Position 547 is a phosphoserine (serine 547). The tract at residues 678–900 (KQEDPKTLKS…LSVPAKYERR (223 aa)) is disordered. 2 stretches are compositionally biased toward low complexity: residues 698-714 (ASTSSASTSGSGSGSSS) and 738-757 (SKGTENGTNGSNSSSSNSKN). Over residues 773 to 782 (TRERRSEYGQ) the composition is skewed to basic and acidic residues. A compositionally biased stretch (gly residues) spans 820–834 (PGTGIGNGHGGGSGS). Low complexity predominate over residues 850–862 (SNNASSSSSNSKR).

Belongs to the VEFS (VRN2-EMF2-FIS2-SU(Z)12) family. In terms of assembly, component of the polycomb repressive complex 2 (PRC2, also known as the Esc/E(Z) complex), composed of Caf1-55, esc, E(z), Su(z)12, and possibly pho. PRC2 associates with the accessory components Jarid2 and jing to form the PRC2 Jarid2-jing variant (PRC2.2). PRC2 may also associate with Pcl and HDAC1/Rpd3 during early embryogenesis. This complex is distinct from the PRC1 complex, which contains many other PcG proteins like Pc, Ph, Psc, Su(z)2. The two complexes however cooperate and interact together during the first 3 hours of development to establish PcG silencing.

The protein resides in the nucleus. It localises to the chromosome. In terms of biological role, polycomb group (PcG) protein. While PcG proteins are generally required to maintain the transcriptionally repressive state of homeotic genes throughout development, this protein is specifically required during the first 6 hours of embryogenesis to establish the repressed state. Component of the Esc/E(z) complex, which methylates 'Lys-9' (H3K9me) and 'Lys-27' (H3K27me) of histone H3, leading to transcriptional repression of the affected target gene. The Esc/E(z) complex is necessary but not sufficient for the repression of homeotic target genes, suggesting that the recruitment of the distinct PRC1 complex is also required. The protein is Polycomb protein Su(z)12 (Su(z)12) of Drosophila melanogaster (Fruit fly).